Consider the following 566-residue polypeptide: Insulinoma-associated protein 2 (566 aa).

The segment at 1–20 (MPRGFLVKRTKRTGGLYRVR) is SNAG domain. A disordered region spans residues 32–117 (QGAPPFLEEA…PSPSPAKPAG (86 aa)). Positions 103 to 113 (GPSPSPSPSPA) are enriched in pro residues. Residues 263 to 283 (FICQLCKEQYADPFALAQHRC) form a C2H2-type 1; atypical zinc finger. Residues 291–313 (YRCPECDKVFSCPANLASHRRWH) form a C2H2-type 2 zinc finger. The segment at 310-418 (RRWHKPRPAA…RRVPVPGSTS (109 aa)) is disordered. The span at 318-348 (AAANAATVSSADGKPPSSSSSSSRDSGAIAS) shows a compositional bias: low complexity. Basic and acidic residues predominate over residues 352 to 369 (EGKENSRIERTADQHPQA). C2H2-type zinc fingers lie at residues 426-448 (FVCP…LSTH), 470-492 (FACP…RLWH), and 525-548 (FSCK…NKCH).

As to expression, expressed in heart, liver, skeletal muscle, kidney and pancreas, and, to a lesser extent, in brain, lung and spleen. In the pancreas, expressed in islet cells, including insulin- and glucagon-producing alpha- and beta-cells, but not in acinar cells (at protein level). Detected in adrenal glands, particularly in the deeper layer of the cortex (at protein level).

The protein resides in the cytoplasm. It localises to the nucleus. In terms of biological role, may function as a growth suppressor or tumor suppressor in liver cells and in certain neurons. The polypeptide is Insulinoma-associated protein 2 (INSM2) (Homo sapiens (Human)).